A 366-amino-acid chain; its full sequence is Galactoside alpha-(1,2)-fucosyltransferase 1 (366 aa).

The Cytoplasmic portion of the chain corresponds to 1–8 (MWPLSHRH). The chain crosses the membrane as a helical; Signal-anchor for type II membrane protein span at residues 9 to 25 (LCLAFLLVCVLSAISFF). Residues 26 to 366 (LHVHQDSFRH…LSPLWTLAEP (341 aa)) lie on the Lumenal side of the membrane. N-linked (GlcNAc...) asparagine glycosylation is found at N66, N302, and N328.

It belongs to the glycosyltransferase 11 family.

The protein resides in the golgi apparatus. It is found in the golgi stack membrane. The catalysed reaction is a beta-D-galactosyl-(1-&gt;4)-N-acetyl-beta-D-glucosaminyl derivative + GDP-beta-L-fucose = an alpha-L-Fuc-(1-&gt;2)-beta-D-Gal-(1-&gt;4)-beta-D-GlcNAc derivative + GDP + H(+). It catalyses the reaction a ganglioside GA1 + GDP-beta-L-fucose = a ganglioside Fuc-GA1 + GDP + H(+). The enzyme catalyses a beta-D-Gal-(1-&gt;3)-beta-D-GlcNAc-(1-&gt;3)-beta-D-Gal-(1-&gt;4)-beta-D-Glc-(1&lt;-&gt;1')-Cer(d18:1(4E)) + GDP-beta-L-fucose = alpha-L-fucosyl-(1-&gt;2)- beta-D-galactosyl-(1-&gt;3)-N-acetyl-beta-D-glucosaminyl-(1-&gt;3)-beta-D-galactosyl-(1-&gt;4)-beta-D-glucosyl-(1&lt;-&gt;1')-N-acylsphing-4-enine + GDP + H(+). It carries out the reaction a neolactoside nLc4Cer(d18:1(4E)) + GDP-beta-L-fucose = a neolactoside IV(2)-alpha-Fuc-nLc4Cer(d18:1(4E)) + GDP + H(+). The catalysed reaction is a ganglioside GM1 + GDP-beta-L-fucose = a ganglioside Fuc-GM1 + GDP + H(+). It catalyses the reaction beta-D-galactosyl-(1-&gt;3)-N-acetyl-D-galactosamine + GDP-beta-L-fucose = alpha-L-fucosyl-(1-&gt;2)-beta-D-galactosyl-(1-&gt;3)-N-acetyl-D-galactosamine + GDP + H(+). The protein operates within protein modification; protein glycosylation. In terms of biological role, catalyzes the transfer of L-fucose, from a guanosine diphosphate-beta-L-fucose, to the terminal galactose residue of glycoconjugates through an alpha(1,2) linkage leading to H antigen synthesis that is an intermediate substrate in the synthesis of ABO blood group antigens. H antigen is essential for maturation of the glomerular layer of the main olfactory bulb, in cell migration and early cell-cell contacts during tumor associated angiogenesis. Preferentially fucosylates soluble lactose and to a lesser extent fucosylates glycolipids gangliosides GA1 and GM1a. The sequence is that of Galactoside alpha-(1,2)-fucosyltransferase 1 from Alouatta caraya (Black howler monkey).